We begin with the raw amino-acid sequence, 239 residues long: Pimeloyl-[acyl-carrier protein] methyl ester esterase (239 aa).

Substrate contacts are provided by residues W20, 77-78 (SM), and 138-142 (FISLQ). The active-site Nucleophile is the S77. Residues D192 and H220 contribute to the active site. H220 is a binding site for substrate.

Belongs to the AB hydrolase superfamily. Carboxylesterase BioH family. As to quaternary structure, monomer.

The protein resides in the cytoplasm. The enzyme catalyses 6-carboxyhexanoyl-[ACP] methyl ester + H2O = 6-carboxyhexanoyl-[ACP] + methanol + H(+). It functions in the pathway cofactor biosynthesis; biotin biosynthesis. The physiological role of BioH is to remove the methyl group introduced by BioC when the pimeloyl moiety is complete. It allows to synthesize pimeloyl-ACP via the fatty acid synthetic pathway through the hydrolysis of the ester bonds of pimeloyl-ACP esters. This is Pimeloyl-[acyl-carrier protein] methyl ester esterase from Legionella pneumophila (strain Lens).